The sequence spans 400 residues: Bifunctional enzyme IspD/IspF (400 aa).

Residues 1–240 (MQESTMKFGI…EKLSHALPDV (240 aa)) form a 2-C-methyl-D-erythritol 4-phosphate cytidylyltransferase region. Positions 241 to 400 (RTGNGYDVHQ…ATVVYQGRPL (160 aa)) are 2-C-methyl-D-erythritol 2,4-cyclodiphosphate synthase. A divalent metal cation contacts are provided by aspartate 247 and histidine 249. Residues 247–249 (DVH) and 273–274 (HS) contribute to the 4-CDP-2-C-methyl-D-erythritol 2-phosphate site. Residue histidine 281 participates in a divalent metal cation binding. Residues 295–297 (DIG), 371–374 (TTNE), phenylalanine 378, and arginine 381 each bind 4-CDP-2-C-methyl-D-erythritol 2-phosphate.

In the N-terminal section; belongs to the IspD/TarI cytidylyltransferase family. IspD subfamily. The protein in the C-terminal section; belongs to the IspF family. Requires a divalent metal cation as cofactor.

The enzyme catalyses 2-C-methyl-D-erythritol 4-phosphate + CTP + H(+) = 4-CDP-2-C-methyl-D-erythritol + diphosphate. It carries out the reaction 4-CDP-2-C-methyl-D-erythritol 2-phosphate = 2-C-methyl-D-erythritol 2,4-cyclic diphosphate + CMP. It functions in the pathway isoprenoid biosynthesis; isopentenyl diphosphate biosynthesis via DXP pathway; isopentenyl diphosphate from 1-deoxy-D-xylulose 5-phosphate: step 2/6. Its pathway is isoprenoid biosynthesis; isopentenyl diphosphate biosynthesis via DXP pathway; isopentenyl diphosphate from 1-deoxy-D-xylulose 5-phosphate: step 4/6. Functionally, bifunctional enzyme that catalyzes the formation of 4-diphosphocytidyl-2-C-methyl-D-erythritol from CTP and 2-C-methyl-D-erythritol 4-phosphate (MEP) (IspD), and catalyzes the conversion of 4-diphosphocytidyl-2-C-methyl-D-erythritol 2-phosphate (CDP-ME2P) to 2-C-methyl-D-erythritol 2,4-cyclodiphosphate (ME-CPP) with a corresponding release of cytidine 5-monophosphate (CMP) (IspF). In Agrobacterium fabrum (strain C58 / ATCC 33970) (Agrobacterium tumefaciens (strain C58)), this protein is Bifunctional enzyme IspD/IspF.